A 502-amino-acid chain; its full sequence is Maturase K (502 aa).

Belongs to the intron maturase 2 family. MatK subfamily.

The protein localises to the plastid. It is found in the chloroplast. Usually encoded in the trnK tRNA gene intron. Probably assists in splicing its own and other chloroplast group II introns. The chain is Maturase K from Stanleya pinnata (Prince's plume).